Here is a 1381-residue protein sequence, read N- to C-terminus: DNA-directed RNA polymerase subunit beta'' (1381 aa).

4 residues coordinate Zn(2+): C224, C295, C302, and C305.

It belongs to the RNA polymerase beta' chain family. RpoC2 subfamily. In plastids the minimal PEP RNA polymerase catalytic core is composed of four subunits: alpha, beta, beta', and beta''. When a (nuclear-encoded) sigma factor is associated with the core the holoenzyme is formed, which can initiate transcription. Zn(2+) is required as a cofactor.

The protein localises to the plastid. It localises to the chloroplast. It catalyses the reaction RNA(n) + a ribonucleoside 5'-triphosphate = RNA(n+1) + diphosphate. DNA-dependent RNA polymerase catalyzes the transcription of DNA into RNA using the four ribonucleoside triphosphates as substrates. This is DNA-directed RNA polymerase subunit beta'' from Lactuca sativa (Garden lettuce).